Consider the following 277-residue polypeptide: MIPKLIVFGGNGFLGKRICQEAVTSGYQVVSVSRSGKAPHSNELNDKQWMQEVQWTAADIFKPDSYHELLNNATNVVHSLGILLENENYKQTLSKSPTYDSKSRLLSFGAGPNPLKKSSPYFTYEMMNKQSAIILADTFKQKILKKSKKEQEKANQRSFTYISADKGFPLIPSGYINSKREAEIELEKMQRYFRPIIVRPGFMFDEHRNAIGPRSFIHTALELLYCGNKFLLRNKLQLLNDLIRPTVSTQQVSKSVLKNIENPDFKGVVTLEEILKA.

It belongs to the NAD(P)-dependent epimerase/dehydratase family. Associates with the mitochondrial ribosome. Component of a multi-subunit COQ enzyme complex.

Its subcellular location is the mitochondrion. Its pathway is cofactor biosynthesis; ubiquinone biosynthesis. Component of MIOREX complexes, large expressome-like assemblies of ribosomes with factors involved in all the steps of post-transcriptional gene expression. Component of a multi-subunit COQ enzyme complex required for coenzyme Q biosynthesis. In Saccharomyces cerevisiae (strain ATCC 204508 / S288c) (Baker's yeast), this protein is MIOREX complex component 2.